The following is a 276-amino-acid chain: Dermonecrotic toxin LdSicTox-alphaIB2 (276 aa).

His-5 is a catalytic residue. Mg(2+)-binding residues include Glu-25 and Asp-27. The Nucleophile role is filled by His-41. 2 disulfides stabilise this stretch: Cys-45/Cys-51 and Cys-47/Cys-190. Asp-85 is a Mg(2+) binding site. Asn-253 carries N-linked (GlcNAc...) asparagine glycosylation.

It belongs to the arthropod phospholipase D family. Class II subfamily. Mg(2+) serves as cofactor. In terms of tissue distribution, expressed by the venom gland.

The protein localises to the secreted. The enzyme catalyses an N-(acyl)-sphingosylphosphocholine = an N-(acyl)-sphingosyl-1,3-cyclic phosphate + choline. It carries out the reaction an N-(acyl)-sphingosylphosphoethanolamine = an N-(acyl)-sphingosyl-1,3-cyclic phosphate + ethanolamine. The catalysed reaction is a 1-acyl-sn-glycero-3-phosphocholine = a 1-acyl-sn-glycero-2,3-cyclic phosphate + choline. It catalyses the reaction a 1-acyl-sn-glycero-3-phosphoethanolamine = a 1-acyl-sn-glycero-2,3-cyclic phosphate + ethanolamine. Dermonecrotic toxins cleave the phosphodiester linkage between the phosphate and headgroup of certain phospholipids (sphingolipid and lysolipid substrates), forming an alcohol (often choline) and a cyclic phosphate. This toxin acts on sphingomyelin (SM). It may also act on ceramide phosphoethanolamine (CPE), lysophosphatidylcholine (LPC) and lysophosphatidylethanolamine (LPE), but not on lysophosphatidylserine (LPS), and lysophosphatidylglycerol (LPG). It acts by transphosphatidylation, releasing exclusively cyclic phosphate products as second products. Induces dermonecrosis, hemolysis, increased vascular permeability, edema, inflammatory response, and platelet aggregation. The protein is Dermonecrotic toxin LdSicTox-alphaIB2 of Loxosceles deserta (Desert recluse spider).